The following is a 514-amino-acid chain: tRNA-2-methylthio-N(6)-dimethylallyladenosine synthase (514 aa).

A disordered region spans residues 1-21; sequence MNEEQRKASSVDVLAERDKKA. The MTTase N-terminal domain maps to 68-186; sequence RTFLIKTYGC…LPEILEEAYL (119 aa). Residues C77, C113, C147, C223, C227, and C230 each contribute to the [4Fe-4S] cluster site. One can recognise a Radical SAM core domain in the interval 209–440; sequence REGNIKAWVN…KKVGHYSQIA (232 aa). A TRAM domain is found at 442–505; that stretch reads SKYEGQTVTV…QYSLNGSFIK (64 aa).

This sequence belongs to the methylthiotransferase family. MiaB subfamily. As to quaternary structure, monomer. The cofactor is [4Fe-4S] cluster.

The protein resides in the cytoplasm. It catalyses the reaction N(6)-dimethylallyladenosine(37) in tRNA + (sulfur carrier)-SH + AH2 + 2 S-adenosyl-L-methionine = 2-methylsulfanyl-N(6)-dimethylallyladenosine(37) in tRNA + (sulfur carrier)-H + 5'-deoxyadenosine + L-methionine + A + S-adenosyl-L-homocysteine + 2 H(+). Functionally, catalyzes the methylthiolation of N6-(dimethylallyl)adenosine (i(6)A), leading to the formation of 2-methylthio-N6-(dimethylallyl)adenosine (ms(2)i(6)A) at position 37 in tRNAs that read codons beginning with uridine. The chain is tRNA-2-methylthio-N(6)-dimethylallyladenosine synthase from Staphylococcus aureus (strain USA300 / TCH1516).